Reading from the N-terminus, the 62-residue chain is MTSRGHLRRAPCCYAFKSATSHQRTRTSLCLASPPAPHCLLLYSHRCLTYFTVDYELSFFCL.

This is an uncharacterized protein from Invertebrate iridescent virus 6 (IIV-6).